Reading from the N-terminus, the 82-residue chain is Putative membrane protein insertion efficiency factor (82 aa).

Belongs to the UPF0161 family.

It is found in the cell inner membrane. Functionally, could be involved in insertion of integral membrane proteins into the membrane. The chain is Putative membrane protein insertion efficiency factor from Rickettsia rickettsii (strain Iowa).